The following is a 385-amino-acid chain: Bifunctional chorismate mutase/prephenate dehydratase (385 aa).

Positions 1–92 (MPANNSLLIF…ESVATQKKLL (92 aa)) constitute a Chorismate mutase domain. The substrate site is built by Arg11, Arg28, Lys39, Asp48, Glu52, Ser84, and Gln88. In terms of domain architecture, Prephenate dehydratase spans 105–285 (NFSFLGPKGS…NITRFILLNR (181 aa)). The tract at residues 286–385 (NPKKISKNIP…PSEKITPIAP (100 aa)) is regulatory. Residues 299 to 376 (TLIFTTGQEA…RFIKILGCYP (78 aa)) enclose the ACT domain.

It is found in the cytoplasm. The catalysed reaction is chorismate = prephenate. It catalyses the reaction prephenate + H(+) = 3-phenylpyruvate + CO2 + H2O. It participates in amino-acid biosynthesis; L-phenylalanine biosynthesis; phenylpyruvate from prephenate: step 1/1. The protein operates within metabolic intermediate biosynthesis; prephenate biosynthesis; prephenate from chorismate: step 1/1. Functionally, catalyzes the Claisen rearrangement of chorismate to prephenate and the decarboxylation/dehydration of prephenate to phenylpyruvate. In Buchnera aphidicola subsp. Acyrthosiphon pisum (strain APS) (Acyrthosiphon pisum symbiotic bacterium), this protein is Bifunctional chorismate mutase/prephenate dehydratase (pheA).